The primary structure comprises 475 residues: Glycogen synthase (475 aa).

An ADP-alpha-D-glucose-binding site is contributed by Lys-15.

The protein belongs to the glycosyltransferase 1 family. Bacterial/plant glycogen synthase subfamily.

The enzyme catalyses [(1-&gt;4)-alpha-D-glucosyl](n) + ADP-alpha-D-glucose = [(1-&gt;4)-alpha-D-glucosyl](n+1) + ADP + H(+). The protein operates within glycan biosynthesis; glycogen biosynthesis. Functionally, synthesizes alpha-1,4-glucan chains using ADP-glucose. The polypeptide is Glycogen synthase (Clostridium kluyveri (strain ATCC 8527 / DSM 555 / NBRC 12016 / NCIMB 10680 / K1)).